We begin with the raw amino-acid sequence, 569 residues long: Methionine--tRNA ligase (569 aa).

Residues 11–21 (PYINGIKHLGN) carry the 'HIGH' region motif. Residues cysteine 143, cysteine 146, cysteine 156, and cysteine 159 each contribute to the Zn(2+) site. A 'KMSKS' region motif is present at residues 342-346 (KFSTS). Residue threonine 345 coordinates ATP.

This sequence belongs to the class-I aminoacyl-tRNA synthetase family. MetG type 1 subfamily. As to quaternary structure, monomer. Requires Zn(2+) as cofactor.

The protein resides in the cytoplasm. It catalyses the reaction tRNA(Met) + L-methionine + ATP = L-methionyl-tRNA(Met) + AMP + diphosphate. Is required not only for elongation of protein synthesis but also for the initiation of all mRNA translation through initiator tRNA(fMet) aminoacylation. This chain is Methionine--tRNA ligase, found in Caulobacter vibrioides (strain ATCC 19089 / CIP 103742 / CB 15) (Caulobacter crescentus).